We begin with the raw amino-acid sequence, 262 residues long: Ribosome biogenesis GTPase A (262 aa).

Positions 12–157 (KRQIKDLLRL…ILDTPGILYK (146 aa)) constitute a CP-type G domain. GTP contacts are provided by residues 54-57 (NKVD), 109-114 (NTGKST), and Gly153.

This sequence belongs to the TRAFAC class YlqF/YawG GTPase family. MTG1 subfamily.

The protein resides in the cytoplasm. Functionally, required for a late step of 50S ribosomal subunit assembly. Has GTPase activity. Binds to the 23S rRNA. This Thermotoga maritima (strain ATCC 43589 / DSM 3109 / JCM 10099 / NBRC 100826 / MSB8) protein is Ribosome biogenesis GTPase A.